A 966-amino-acid chain; its full sequence is Leucine--tRNA ligase (966 aa).

The 'HIGH' region signature appears at 41 to 51 (PYLNGNLHAGH). The 'KMSKS' region motif lies at 632 to 636 (KMSKS). Residue Lys635 participates in ATP binding.

Belongs to the class-I aminoacyl-tRNA synthetase family.

It is found in the cytoplasm. The enzyme catalyses tRNA(Leu) + L-leucine + ATP = L-leucyl-tRNA(Leu) + AMP + diphosphate. The sequence is that of Leucine--tRNA ligase from Methanosarcina mazei (strain ATCC BAA-159 / DSM 3647 / Goe1 / Go1 / JCM 11833 / OCM 88) (Methanosarcina frisia).